The following is a 142-amino-acid chain: Large ribosomal subunit protein uL13 (142 aa).

Belongs to the universal ribosomal protein uL13 family. As to quaternary structure, part of the 50S ribosomal subunit.

Functionally, this protein is one of the early assembly proteins of the 50S ribosomal subunit, although it is not seen to bind rRNA by itself. It is important during the early stages of 50S assembly. This is Large ribosomal subunit protein uL13 from Xanthomonas oryzae pv. oryzae (strain MAFF 311018).